We begin with the raw amino-acid sequence, 330 residues long: Copper-containing nitrite reductase (330 aa).

Plastocyanin-like domains follow at residues 1 to 165 and 166 to 330; these read GLPR…YDRV and YTIG…PGPA. The Cu cation site is built by His-85, His-90, His-125, Cys-126, His-135, Met-140, and His-296.

It belongs to the multicopper oxidase family. Homotrimer. The cofactor is Cu(2+). Requires Cu(+) as cofactor. FAD is required as a cofactor.

It is found in the periplasm. It catalyses the reaction nitric oxide + Fe(III)-[cytochrome c] + H2O = Fe(II)-[cytochrome c] + nitrite + 2 H(+). It participates in nitrogen metabolism; nitrate reduction (denitrification); dinitrogen from nitrate: step 2/4. This chain is Copper-containing nitrite reductase (nirK), found in Alcaligenes xylosoxydans xylosoxydans (Achromobacter xylosoxidans).